We begin with the raw amino-acid sequence, 224 residues long: tRNA pseudouridine synthase B (224 aa).

Catalysis depends on Asp-46, which acts as the Nucleophile.

This sequence belongs to the pseudouridine synthase TruB family. Type 1 subfamily.

The enzyme catalyses uridine(55) in tRNA = pseudouridine(55) in tRNA. Its function is as follows. Responsible for synthesis of pseudouridine from uracil-55 in the psi GC loop of transfer RNAs. This Methylococcus capsulatus (strain ATCC 33009 / NCIMB 11132 / Bath) protein is tRNA pseudouridine synthase B.